The primary structure comprises 209 residues: RNA chaperone ProQ (209 aa).

The disordered stretch occupies residues 105–148 (ESQDKAKAKRAALAPKPAAKKAPKKVAVPQRAKTERPAKPAPKA).

Belongs to the ProQ family.

The protein resides in the cytoplasm. Functionally, RNA chaperone with significant RNA binding, RNA strand exchange and RNA duplexing activities. This Shewanella baltica (strain OS223) protein is RNA chaperone ProQ.